The following is a 339-amino-acid chain: Probable N5-carboxyaminoimidazole ribonucleotide mutase (339 aa).

Substrate-binding residues include serine 11, aspartate 14, and arginine 41.

This sequence belongs to the AIR carboxylase family. Class I subfamily.

The catalysed reaction is 5-carboxyamino-1-(5-phospho-D-ribosyl)imidazole + H(+) = 5-amino-1-(5-phospho-D-ribosyl)imidazole-4-carboxylate. The protein operates within purine metabolism; IMP biosynthesis via de novo pathway; 5-amino-1-(5-phospho-D-ribosyl)imidazole-4-carboxylate from 5-amino-1-(5-phospho-D-ribosyl)imidazole (N5-CAIR route): step 2/2. Catalyzes the conversion of N5-carboxyaminoimidazole ribonucleotide (N5-CAIR) to 4-carboxy-5-aminoimidazole ribonucleotide (CAIR). The protein is Probable N5-carboxyaminoimidazole ribonucleotide mutase of Methanobrevibacter smithii.